We begin with the raw amino-acid sequence, 282 residues long: tRNA (guanine-N(7)-)-methyltransferase (282 aa).

The interval 1–29 is disordered; it reads MPHAPAKRQKREEYKNALHEDESNAALPK. A compositionally biased stretch (basic and acidic residues) spans 10-22; sequence KREEYKNALHEDE. S-adenosyl-L-methionine contacts are provided by residues Gly-104, 153 to 154, and Cys-173; that span reads NT. Asp-176 is a catalytic residue. Residue 255–257 coordinates S-adenosyl-L-methionine; sequence TEE.

It belongs to the class I-like SAM-binding methyltransferase superfamily. TrmB family. Forms a complex with TRM82.

It localises to the nucleus. It carries out the reaction guanosine(46) in tRNA + S-adenosyl-L-methionine = N(7)-methylguanosine(46) in tRNA + S-adenosyl-L-homocysteine. Its pathway is tRNA modification; N(7)-methylguanine-tRNA biosynthesis. Its function is as follows. Catalyzes the formation of N(7)-methylguanine at position 46 (m7G46) in tRNA. In Phaeosphaeria nodorum (strain SN15 / ATCC MYA-4574 / FGSC 10173) (Glume blotch fungus), this protein is tRNA (guanine-N(7)-)-methyltransferase.